The following is a 220-amino-acid chain: Thiamine-phosphate synthase (220 aa).

4-amino-2-methyl-5-(diphosphooxymethyl)pyrimidine contacts are provided by residues 39–43 and Asn80; that span reads QLRDK. Residues Asp81 and Asp100 each coordinate Mg(2+). Residue Ser119 coordinates 4-amino-2-methyl-5-(diphosphooxymethyl)pyrimidine. 145–147 is a 2-[(2R,5Z)-2-carboxy-4-methylthiazol-5(2H)-ylidene]ethyl phosphate binding site; sequence TPT. Position 148 (Lys148) interacts with 4-amino-2-methyl-5-(diphosphooxymethyl)pyrimidine. Gly176 is a 2-[(2R,5Z)-2-carboxy-4-methylthiazol-5(2H)-ylidene]ethyl phosphate binding site.

This sequence belongs to the thiamine-phosphate synthase family. Mg(2+) is required as a cofactor.

It carries out the reaction 2-[(2R,5Z)-2-carboxy-4-methylthiazol-5(2H)-ylidene]ethyl phosphate + 4-amino-2-methyl-5-(diphosphooxymethyl)pyrimidine + 2 H(+) = thiamine phosphate + CO2 + diphosphate. The catalysed reaction is 2-(2-carboxy-4-methylthiazol-5-yl)ethyl phosphate + 4-amino-2-methyl-5-(diphosphooxymethyl)pyrimidine + 2 H(+) = thiamine phosphate + CO2 + diphosphate. It catalyses the reaction 4-methyl-5-(2-phosphooxyethyl)-thiazole + 4-amino-2-methyl-5-(diphosphooxymethyl)pyrimidine + H(+) = thiamine phosphate + diphosphate. Its pathway is cofactor biosynthesis; thiamine diphosphate biosynthesis; thiamine phosphate from 4-amino-2-methyl-5-diphosphomethylpyrimidine and 4-methyl-5-(2-phosphoethyl)-thiazole: step 1/1. In terms of biological role, condenses 4-methyl-5-(beta-hydroxyethyl)thiazole monophosphate (THZ-P) and 2-methyl-4-amino-5-hydroxymethyl pyrimidine pyrophosphate (HMP-PP) to form thiamine monophosphate (TMP). The sequence is that of Thiamine-phosphate synthase from Mycobacterium marinum (strain ATCC BAA-535 / M).